Here is a 287-residue protein sequence, read N- to C-terminus: MALWIAVLLGVVQGIFMFLPVSSTAHMVLLEHWLIGRDHPMPAPESAEMILFNLVVHVGTLVSIVVVFAPSLLRFTRYSLRDAYGWARAGRFQGPPLYARLFLLGMLSVLFTGVVGLTLKATFEQVFANPWMIAFTLILTGALLFWTDKLPPRRRGLRQTGVGTATLIGVAQGFALMPGLSRSAMTIVFGLFAGLKRRWAAEYSFFLAIPTICAATLLQAIEVYQLGGLESVSVAALITGFVVAAGVGIVSLKLVIYFLYRAQLKVFSFYVWALAAAILLGWIDLPI.

The next 8 membrane-spanning stretches (helical) occupy residues 1 to 21 (MALW…FLPV), 49 to 69 (MILF…VVFA), 101 to 121 (LFLL…TLKA), 126 to 146 (VFAN…LLFW), 160 to 180 (TGVG…MPGL), 203 to 223 (YSFF…AIEV), 232 to 252 (VSVA…IVSL), and 267 to 287 (FSFY…DLPI).

Belongs to the UppP family.

The protein localises to the cell inner membrane. It catalyses the reaction di-trans,octa-cis-undecaprenyl diphosphate + H2O = di-trans,octa-cis-undecaprenyl phosphate + phosphate + H(+). Functionally, catalyzes the dephosphorylation of undecaprenyl diphosphate (UPP). Confers resistance to bacitracin. The polypeptide is Undecaprenyl-diphosphatase (Halorhodospira halophila (strain DSM 244 / SL1) (Ectothiorhodospira halophila (strain DSM 244 / SL1))).